The following is a 421-amino-acid chain: Histidine--tRNA ligase (421 aa).

It belongs to the class-II aminoacyl-tRNA synthetase family. Homodimer.

Its subcellular location is the cytoplasm. The catalysed reaction is tRNA(His) + L-histidine + ATP = L-histidyl-tRNA(His) + AMP + diphosphate + H(+). This Coxiella burnetii (strain CbuG_Q212) (Coxiella burnetii (strain Q212)) protein is Histidine--tRNA ligase.